We begin with the raw amino-acid sequence, 227 residues long: ATP synthase F(0) complex subunit a (227 aa).

Transmembrane regions (helical) follow at residues 14-34 (FLGI…FPTP), 69-89 (WAIL…LGLL), 99-119 (LSLN…IGMF), 139-159 (VPVL…ALGV), 165-185 (LTAG…LLTM), and 190-210 (ALLT…VAMI).

Belongs to the ATPase A chain family. As to quaternary structure, component of the ATP synthase complex composed at least of ATP5F1A/subunit alpha, ATP5F1B/subunit beta, ATP5MC1/subunit c (homooctomer), MT-ATP6/subunit a, MT-ATP8/subunit 8, ATP5ME/subunit e, ATP5MF/subunit f, ATP5MG/subunit g, ATP5MK/subunit k, ATP5MJ/subunit j, ATP5F1C/subunit gamma, ATP5F1D/subunit delta, ATP5F1E/subunit epsilon, ATP5PF/subunit F6, ATP5PB/subunit b, ATP5PD/subunit d, ATP5PO/subunit OSCP. ATP synthase complex consists of a soluble F(1) head domain (subunits alpha(3) and beta(3)) - the catalytic core - and a membrane F(0) domain - the membrane proton channel (subunits c, a, 8, e, f, g, k and j). These two domains are linked by a central stalk (subunits gamma, delta, and epsilon) rotating inside the F1 region and a stationary peripheral stalk (subunits F6, b, d, and OSCP). Interacts with DNAJC30; interaction is direct.

The protein resides in the mitochondrion inner membrane. The catalysed reaction is H(+)(in) = H(+)(out). Subunit a, of the mitochondrial membrane ATP synthase complex (F(1)F(0) ATP synthase or Complex V) that produces ATP from ADP in the presence of a proton gradient across the membrane which is generated by electron transport complexes of the respiratory chain. ATP synthase complex consist of a soluble F(1) head domain - the catalytic core - and a membrane F(1) domain - the membrane proton channel. These two domains are linked by a central stalk rotating inside the F(1) region and a stationary peripheral stalk. During catalysis, ATP synthesis in the catalytic domain of F(1) is coupled via a rotary mechanism of the central stalk subunits to proton translocation. With the subunit c (ATP5MC1), forms the proton-conducting channel in the F(0) domain, that contains two crucial half-channels (inlet and outlet) that facilitate proton movement from the mitochondrial intermembrane space (IMS) into the matrix. Protons are taken up via the inlet half-channel and released through the outlet half-channel, following a Grotthuss mechanism. This chain is ATP synthase F(0) complex subunit a, found in Scyliorhinus canicula (Small-spotted catshark).